The chain runs to 221 residues: NEDD4 family-interacting protein 1 (221 aa).

At Ala-2 the chain carries N-acetylalanine. Residues 2 to 41 (ALALAALAAVEPACGSRYQQLQNEEESGEPEQAAGDAPPP) form an interaction with UBE2L3 region. The Cytoplasmic segment spans residues 2-116 (ALALAALAAV…ADQLRIGNDG (115 aa)). The disordered stretch occupies residues 18-45 (RYQQLQNEEESGEPEQAAGDAPPPYSSI). 3 consecutive short sequence motifs (PPxY motif) follow at residues 39–42 (PPPY), 64–67 (PPSY), and 74–76 (PSY). Residues 42 to 76 (YSSISAESAAYFDYKDESGFPKPPSYNVATTLPSY) form an interaction with ITCH region. A helical membrane pass occupies residues 117-137 (IFMLTFFMAFLFNWIGFFLSF). Topologically, residues 138–143 (CLTTSA) are extracellular. A helical membrane pass occupies residues 144–164 (AGRYGAISGFGLSLIKWILIV). Topologically, residues 165–172 (RFSTYFPG) are cytoplasmic. Residues 173-193 (YFDGQYWLWWVFLVLGFLLFL) traverse the membrane as a helical segment. Topologically, residues 194 to 221 (RGFINYAKVRKMPETFSNLPRTRVLFIY) are extracellular.

As to quaternary structure, forms heterodimers with NDFIP2. Interacts with several E3 ubiquitin-protein ligases, including ITCH, NEDD4, NEDD4L and WWP2. The interaction with NEDD4, NEDD4L and ITCH leads to relocalization of these proteins to exosomes and eventually to exosomal secretion. Interacts with U2SURP. Interacts with SLC11A2/DMT1. Interacts with PTEN. May interact with phosphorylated EGFR. Interacts with BRAT1. Interacts with KCNH2. Interacts with MAVS. Part of a complex containing ITCH, NDFIP1 and MAP3K7. Interacts (via N-terminus) with UBE2L3; the interaction mediates recruitment of UBE2L3 to ITCH. In terms of processing, ubiquitinated by NEDD4 and ITCH; mono-, di- and polyubiquitinated forms are detected. Ubiquitination regulates its degradation. Undergoes transient tyrosine phosphorylation following EGF stimulation, most probably by catalyzed by SRC. Phosphorylation SRC is enhanced in the presence of NDFIP2 which may act as a scaffold to recruit SRC to NDFIP1. In terms of tissue distribution, widely expressed. Higher levels are detected in cerebellum, pituitary, thalamus, kidney, liver, testis, salivary glands and placenta. Also expressed in fetal brain, kidney and lung.

The protein resides in the endosome membrane. It is found in the golgi apparatus membrane. It localises to the synapse. Its subcellular location is the synaptosome. The protein localises to the cell projection. The protein resides in the dendrite. It is found in the secreted. Functionally, activates HECT domain-containing E3 ubiquitin-protein ligases, including NEDD4 and ITCH, and consequently modulates the stability of their targets. As a result, controls many cellular processes. Prevents chronic T-helper cell-mediated inflammation by activating ITCH and thus controlling JUNB degradation. Promotes pancreatic beta cell death through degradation of JUNB and inhibition of the unfolded protein response, leading to reduction of insulin secretion. Restricts the production of pro-inflammatory cytokines in effector Th17 T-cells by promoting ITCH-mediated ubiquitination and degradation of RORC. Together with NDFIP2, limits the cytokine signaling and expansion of effector Th2 T-cells by promoting degradation of JAK1, probably by ITCH- and NEDD4L-mediated ubiquitination. Regulates peripheral T-cell tolerance to self and foreign antigens, forcing the exit of naive CD4+ T-cells from the cell cycle before they become effector T-cells. Negatively regulates RLR-mediated antiviral response by promoting SMURF1-mediated ubiquitination and subsequent degradation of MAVS. Negatively regulates KCNH2 potassium channel activity by decreasing its cell-surface expression and interfering with channel maturation through recruitment of NEDD4L to the Golgi apparatus where it mediates KCNH2 degradation. In cortical neurons, mediates the ubiquitination of the divalent metal transporter SLC11A2/DMT1 by NEDD4L, leading to its down-regulation and protection of the cells from cobalt and iron toxicity. Important for normal development of dendrites and dendritic spines in cortex. Enhances the ubiquitination of BRAT1 mediated by: NEDD4, NEDD4L and ITCH and is required for the nuclear localization of ubiquitinated BRAT1. Enhances the ITCH-mediated ubiquitination of MAP3K7 by recruiting E2 ubiquitin-conjugating enzyme UBE2L3 to ITCH. Modulates EGFR signaling through multiple pathways. In particular, may regulate the ratio of AKT1-to-MAPK8 signaling in response to EGF, acting on AKT1 probably through PTEN destabilization and on MAPK8 through ITCH-dependent MAP2K4 inactivation. As a result, may control cell growth rate. Inhibits cell proliferation by promoting PTEN nuclear localization and changing its signaling specificity. The sequence is that of NEDD4 family-interacting protein 1 (NDFIP1) from Homo sapiens (Human).